The sequence spans 481 residues: ATP synthase subunit alpha (481 aa).

Residue 145–152 participates in ATP binding; it reads GDRQTGKT.

The protein belongs to the ATPase alpha/beta chains family. In terms of assembly, F-type ATPases have 2 components, CF(1) - the catalytic core - and CF(0) - the membrane proton channel. CF(1) has five subunits: alpha(3), beta(3), gamma(1), delta(1), epsilon(1). CF(0) has three main subunits: a(1), b(2) and c(9-12). The alpha and beta chains form an alternating ring which encloses part of the gamma chain. CF(1) is attached to CF(0) by a central stalk formed by the gamma and epsilon chains, while a peripheral stalk is formed by the delta and b chains.

The protein resides in the cell membrane. It carries out the reaction ATP + H2O + 4 H(+)(in) = ADP + phosphate + 5 H(+)(out). Produces ATP from ADP in the presence of a proton gradient across the membrane. The alpha chain is a regulatory subunit. The protein is ATP synthase subunit alpha of Carsonella ruddii (strain PV).